Here is a 435-residue protein sequence, read N- to C-terminus: Xylose isomerase (435 aa).

Catalysis depends on residues histidine 100 and aspartate 103. Residues glutamate 231, glutamate 267, histidine 270, aspartate 295, aspartate 306, aspartate 308, and aspartate 338 each contribute to the Mg(2+) site.

The protein belongs to the xylose isomerase family. As to quaternary structure, homotetramer. Mg(2+) serves as cofactor.

Its subcellular location is the cytoplasm. It carries out the reaction alpha-D-xylose = alpha-D-xylulofuranose. This chain is Xylose isomerase, found in Brucella canis (strain ATCC 23365 / NCTC 10854 / RM-666).